The chain runs to 642 residues: Threonine--tRNA ligase (642 aa).

The TGS domain maps to 1 to 61 (MPVITLPDGS…ENDAQLSIIT (61 aa)). Residues 243 to 534 (DHRKIGKQLD…LTEEFAGFFP (292 aa)) form a catalytic region. Residue K286 is modified to N6-acetyllysine. Positions 334, 385, and 511 each coordinate Zn(2+).

The protein belongs to the class-II aminoacyl-tRNA synthetase family. As to quaternary structure, homodimer. Zn(2+) is required as a cofactor.

It is found in the cytoplasm. The catalysed reaction is tRNA(Thr) + L-threonine + ATP = L-threonyl-tRNA(Thr) + AMP + diphosphate + H(+). Its function is as follows. Catalyzes the attachment of threonine to tRNA(Thr) in a two-step reaction: L-threonine is first activated by ATP to form Thr-AMP and then transferred to the acceptor end of tRNA(Thr). Also edits incorrectly charged L-seryl-tRNA(Thr). This Escherichia coli O8 (strain IAI1) protein is Threonine--tRNA ligase.